The following is a 515-amino-acid chain: Vacuolar fusion protein CCZ1 homolog A (515 aa).

It belongs to the CCZ1 family. As to quaternary structure, interacts with MON1.

Its subcellular location is the endosome. The protein localises to the prevacuolar compartment. Plays an important role in membrane trafficking through the secretory apparatus. In complex with MON1, acts as a guanine exchange factor (GEF) for RABG3F of the Rab7 protein family. Promotes the exchange of GDP to GTP, converting RABG3F from an inactive GDP-bound form into an active GTP-bound form. The RABG3F active form is involved in protein trafficking from prevacuolar compartments (PVCs) to vacuoles. May serve as a linker between Rab5 and Rab7 protein families in PVCs and mediate PVC maturation. This chain is Vacuolar fusion protein CCZ1 homolog A, found in Arabidopsis thaliana (Mouse-ear cress).